Here is a 171-residue protein sequence, read N- to C-terminus: Methyl-coenzyme M reductase operon protein D (171 aa).

As to quaternary structure, MCR is composed of three subunits: alpha, beta, and gamma. The function of proteins C and D is not known.

The sequence is that of Methyl-coenzyme M reductase operon protein D (mcrD) from Methanosarcina barkeri (strain Fusaro / DSM 804).